The sequence spans 112 residues: Photosystem II reaction center Psb28 protein (112 aa).

It belongs to the Psb28 family. Part of the photosystem II complex.

The protein localises to the cellular thylakoid membrane. In Synechocystis sp. (strain ATCC 27184 / PCC 6803 / Kazusa), this protein is Photosystem II reaction center Psb28 protein.